The following is a 401-amino-acid chain: F-box protein At2g43440 (401 aa).

Residues 7-53 form the F-box domain; sequence NTNSIYIVPELLEDIFLRLPLKSILKFKTVSRQWRSILESKLFVERR.

In Arabidopsis thaliana (Mouse-ear cress), this protein is F-box protein At2g43440.